The chain runs to 76 residues: DNA-directed RNA polymerase subunit Rpo10 (76 aa).

C16, C19, C53, and C54 together coordinate Zn(2+).

This sequence belongs to the archaeal Rpo10/eukaryotic RPB10 RNA polymerase subunit family. As to quaternary structure, part of the RNA polymerase complex. The cofactor is Zn(2+).

The protein resides in the cytoplasm. The catalysed reaction is RNA(n) + a ribonucleoside 5'-triphosphate = RNA(n+1) + diphosphate. In terms of biological role, DNA-dependent RNA polymerase (RNAP) catalyzes the transcription of DNA into RNA using the four ribonucleoside triphosphates as substrates. The sequence is that of DNA-directed RNA polymerase subunit Rpo10 from Archaeoglobus fulgidus (strain ATCC 49558 / DSM 4304 / JCM 9628 / NBRC 100126 / VC-16).